A 370-amino-acid chain; its full sequence is Mesoderm posterior protein 2 (370 aa).

Disordered regions lie at residues 51–89 (PSQP…EREK), 231–265 (SLER…HWTQ), and 325–350 (TSED…GLQL). A compositionally biased stretch (low complexity) spans 57–77 (PARSTRTTQATAPRRTRPAPA). A bHLH domain is found at 79–133 (GQRQSASEREKLRMRTLARALQELRRFLPPSVAPAGQSLTKIETLRLAIRYIGHL). Residues 325–334 (TSEDQGSSPA) show a composition bias toward polar residues. The interval 326–330 (SEDQG) is may contain a degradation domain.

Degraded by the proteasome. Post-translationally, phosphorylated.

Its subcellular location is the nucleus. Transcription factor with important role in somitogenesis. Defines the rostrocaudal patterning of the somite by participating in distinct Notch pathways. Also regulates the FGF signaling pathway. Specifies the rostral half of the somites. Generates rostro-caudal polarity of somites by down-regulating in the presumptive rostral domain DLL1, a Notch ligand. Participates in the segment border formation by activating in the anterior presomitic mesoderm LFNG, a negative regulator of DLL1-Notch signaling. Acts as a strong suppressor of Notch activity. Together with MESP1 is involved in the epithelialization of somitic mesoderm and in the development of cardiac mesoderm. May play a role with Tcf15 in the differentiation of myotomal and sclerotomal cells by regulating Pax family genes. Also controls the expression of the protocadherin PCDH8/PAPC, EPHA4, RIPPLY2, NOTCH2, FGFR1, and CER1. Binds to the E-boxes within the EPH4A and RIPPLY2 enhancers. This Mus musculus (Mouse) protein is Mesoderm posterior protein 2 (Mesp2).